Consider the following 142-residue polypeptide: Pleckstrin homology-like domain family A member 2 (142 aa).

Serine 3 bears the Phosphoserine mark. One can recognise a PH domain in the interval valine 7–isoleucine 99.

Belongs to the PHLDA2 family.

It is found in the cytoplasm. The protein resides in the membrane. Plays a role in regulating placenta growth. May act via its PH domain that competes with other PH domain-containing proteins, thereby preventing their binding to membrane lipids. In Bos taurus (Bovine), this protein is Pleckstrin homology-like domain family A member 2 (PHLDA2).